A 395-amino-acid polypeptide reads, in one-letter code: Homoserine O-acetyltransferase (395 aa).

In terms of domain architecture, AB hydrolase-1 spans 65–363; it reads PIVLIEHALT…SPTGHDGFLI (299 aa). S160 acts as the Nucleophile in catalysis. A substrate-binding site is contributed by R230. Active-site residues include D328 and H358. D359 contributes to the substrate binding site.

It belongs to the AB hydrolase superfamily. MetX family. Homodimer.

It localises to the cytoplasm. It carries out the reaction L-homoserine + acetyl-CoA = O-acetyl-L-homoserine + CoA. Its pathway is amino-acid biosynthesis; L-methionine biosynthesis via de novo pathway; O-acetyl-L-homoserine from L-homoserine: step 1/1. Transfers an acetyl group from acetyl-CoA to L-homoserine, forming acetyl-L-homoserine. This Corynebacterium jeikeium (strain K411) protein is Homoserine O-acetyltransferase.